Here is a 1070-residue protein sequence, read N- to C-terminus: Carbamoyl phosphate synthase large chain (1070 aa).

The segment at 1 to 401 (MPKRDDIKTI…ALLKAVRSLE (401 aa)) is carboxyphosphate synthetic domain. R129, R169, G175, G176, K208, I210, E215, G241, I242, H243, Q284, and E298 together coordinate ATP. Residues 133 to 327 (RDLMNELGEP…IAKLAAKIAV (195 aa)) form the ATP-grasp 1 domain. Mg(2+) is bound by residues Q284, E298, and N300. Positions 284, 298, and 300 each coordinate Mn(2+). An oligomerization domain region spans residues 402–546 (IGADHLLLEE…YSTYEEENES (145 aa)). The tract at residues 547–929 (TRSAKESVIV…ALYKGFVASG (383 aa)) is carbamoyl phosphate synthetic domain. An ATP-grasp 2 domain is found at 671 to 861 (EKALEILQIP…MANVATRVIL (191 aa)). R707, R746, V748, E752, G777, V778, H779, S780, Q820, and E832 together coordinate ATP. The Mg(2+) site is built by Q820, E832, and N834. The Mn(2+) site is built by Q820, E832, and N834. The MGS-like domain maps to 930 to 1070 (TTMHDYGTVL…SEVKQPKARV (141 aa)). An allosteric domain region spans residues 930–1070 (TTMHDYGTVL…SEVKQPKARV (141 aa)).

Belongs to the CarB family. As to quaternary structure, composed of two chains; the small (or glutamine) chain promotes the hydrolysis of glutamine to ammonia, which is used by the large (or ammonia) chain to synthesize carbamoyl phosphate. Tetramer of heterodimers (alpha,beta)4. Mg(2+) serves as cofactor. It depends on Mn(2+) as a cofactor.

It catalyses the reaction hydrogencarbonate + L-glutamine + 2 ATP + H2O = carbamoyl phosphate + L-glutamate + 2 ADP + phosphate + 2 H(+). The catalysed reaction is hydrogencarbonate + NH4(+) + 2 ATP = carbamoyl phosphate + 2 ADP + phosphate + 2 H(+). The protein operates within amino-acid biosynthesis; L-arginine biosynthesis; carbamoyl phosphate from bicarbonate: step 1/1. It participates in pyrimidine metabolism; UMP biosynthesis via de novo pathway; (S)-dihydroorotate from bicarbonate: step 1/3. In terms of biological role, large subunit of the glutamine-dependent carbamoyl phosphate synthetase (CPSase). CPSase catalyzes the formation of carbamoyl phosphate from the ammonia moiety of glutamine, carbonate, and phosphate donated by ATP, constituting the first step of 2 biosynthetic pathways, one leading to arginine and/or urea and the other to pyrimidine nucleotides. The large subunit (synthetase) binds the substrates ammonia (free or transferred from glutamine from the small subunit), hydrogencarbonate and ATP and carries out an ATP-coupled ligase reaction, activating hydrogencarbonate by forming carboxy phosphate which reacts with ammonia to form carbamoyl phosphate. This chain is Carbamoyl phosphate synthase large chain, found in Listeria monocytogenes serotype 4a (strain HCC23).